The primary structure comprises 109 residues: Enhancer of rudimentary homolog (109 aa).

Belongs to the E(R) family. As to quaternary structure, homodimer.

May have a role in the cell cycle. In Arabidopsis thaliana (Mouse-ear cress), this protein is Enhancer of rudimentary homolog.